The chain runs to 346 residues: D-erythrose-4-phosphate dehydrogenase (346 aa).

An NAD(+)-binding site is contributed by Arg11–Ile12. Residues Ser163–Thr165, Arg209, Thr222–Lys223, and Arg245 each bind substrate. The Nucleophile role is filled by Cys164. Residue Asn327 coordinates NAD(+).

Belongs to the glyceraldehyde-3-phosphate dehydrogenase family. Epd subfamily. As to quaternary structure, homotetramer.

The protein localises to the cytoplasm. The catalysed reaction is D-erythrose 4-phosphate + NAD(+) + H2O = 4-phospho-D-erythronate + NADH + 2 H(+). It participates in cofactor biosynthesis; pyridoxine 5'-phosphate biosynthesis; pyridoxine 5'-phosphate from D-erythrose 4-phosphate: step 1/5. Catalyzes the NAD-dependent conversion of D-erythrose 4-phosphate to 4-phosphoerythronate. The polypeptide is D-erythrose-4-phosphate dehydrogenase (Vibrio vulnificus (strain CMCP6)).